Consider the following 218-residue polypeptide: Adenylate kinase (218 aa).

Residue 10–15 coordinates ATP; it reads GAGKGT. Positions 30 to 59 are NMP; it reads STGDMLRAAVKAGTPLGIEAKKVMDAGGLV. Residues Thr31, Arg36, 57-59, 85-88, and Gln92 contribute to the AMP site; these read GLV and GFPR. Positions 122–159 are LID; that stretch reads GRRSHAASGRTYHVKFNPPKVAGVDDVTGEPLIQRDDD. ATP-binding positions include Arg123 and 132-133; that span reads TY. Positions 156 and 167 each coordinate AMP. Gly203 is a binding site for ATP.

The protein belongs to the adenylate kinase family. Monomer.

The protein localises to the cytoplasm. The enzyme catalyses AMP + ATP = 2 ADP. Its pathway is purine metabolism; AMP biosynthesis via salvage pathway; AMP from ADP: step 1/1. Functionally, catalyzes the reversible transfer of the terminal phosphate group between ATP and AMP. Plays an important role in cellular energy homeostasis and in adenine nucleotide metabolism. The protein is Adenylate kinase of Albidiferax ferrireducens (strain ATCC BAA-621 / DSM 15236 / T118) (Rhodoferax ferrireducens).